The chain runs to 347 residues: Phosphoribosylformylglycinamidine cyclo-ligase (347 aa).

This sequence belongs to the AIR synthase family.

The protein resides in the cytoplasm. The catalysed reaction is 2-formamido-N(1)-(5-O-phospho-beta-D-ribosyl)acetamidine + ATP = 5-amino-1-(5-phospho-beta-D-ribosyl)imidazole + ADP + phosphate + H(+). Its pathway is purine metabolism; IMP biosynthesis via de novo pathway; 5-amino-1-(5-phospho-D-ribosyl)imidazole from N(2)-formyl-N(1)-(5-phospho-D-ribosyl)glycinamide: step 2/2. The sequence is that of Phosphoribosylformylglycinamidine cyclo-ligase from Yersinia pestis.